Here is a 598-residue protein sequence, read N- to C-terminus: MFS siderochrome iron transporter D (598 aa).

The disordered stretch occupies residues 1–34 (MLSSWQKKFFQTPEHPPAEGIAPPRDDGVPNPEP). Residues 1-76 (MLSSWQKKFF…AEAITLTWSK (76 aa)) lie on the Cytoplasmic side of the membrane. A helical transmembrane segment spans residues 77–97 (ISLGAAYFLMWLLYLVNGFQA). The Extracellular portion of the chain corresponds to 98 to 115 (SITGNLSAYVTSGFESHS). Asn-102 carries N-linked (GlcNAc...) asparagine glycosylation. A helical membrane pass occupies residues 116 to 136 (LIPVISIVSSVMSAATYMPLA). Topologically, residues 137–144 (KVLNLWDR) are cytoplasmic. The helical transmembrane segment at 145–165 (SIGFIIMVAFATLGLILSATC) threads the bilayer. The Extracellular segment spans residues 166–171 (HDIGTY). The helical transmembrane segment at 172–192 (CAAQVFYSIGFAGIIFSVDVI) threads the bilayer. Topologically, residues 193-203 (TADTSTLRDRG) are cytoplasmic. A helical transmembrane segment spans residues 204–224 (LAYAFTSSPYIITAFGGPAAA). The Extracellular portion of the chain corresponds to 225–233 (EHFYDSNWR). Residues 234–254 (WAYGCFSIVLPVVALPMFCLL) traverse the membrane as a helical segment. At 255 to 289 (RWNRHKAKKSGLLKDKADSGRTWMESIRHYIIEFD) the chain is on the cytoplasmic side. A helical transmembrane segment spans residues 290-310 (ILGVFFLAAGLVLFLLPFSIA). At 311–318 (GSTEDDWK) the chain is on the extracellular side. The chain crosses the membrane as a helical span at residues 319–339 (SASIITMLVIGFVCLLVFALV). Over 340–341 (ER) the chain is Cytoplasmic. A helical transmembrane segment spans residues 342-362 (FVAPVPFLPWALLASRTVLGA). Residues 363–396 (CMLDVCYQIAYYCWFNYYTSYLQVVYGTSITTAG) lie on the Extracellular side of the membrane. Residues 397 to 417 (YITSIFDVVSGVWLFIVGFLI) traverse the membrane as a helical segment. Over 418-424 (KKTNRFR) the chain is Cytoplasmic. A helical transmembrane segment spans residues 425-445 (WLLFIAVPLYILGVGLMIYFR). The Extracellular segment spans residues 446–450 (KPSWS). A helical transmembrane segment spans residues 451–471 (VGYMIMCQIFIAFAGGTMIIC). Residues 472-490 (QQVAVLAASDHDHAASSLA) are Cytoplasmic-facing. Residues 491–511 (FLNVFGTMGSAVGSSISGAIW) form a helical membrane-spanning segment. Over 512 to 562 (THTLPGALQRLLPDSVKADWQTIYDSLEEQLSYERGTLIRQAIALAYASTQ) the chain is Extracellular. A helical transmembrane segment spans residues 563-583 (SKMLIAGTAIMALSLVWMFVI). At 584–598 (RDIKLTKTQTKGVLF) the chain is on the cytoplasmic side.

Belongs to the major facilitator superfamily.

It localises to the cell membrane. Major facilitator transporter involved in fusarinine C (FsC) uptake. In contrast to TAFC-mediated iron uptake, FsC-mediated iron uptake via mirD does not play a significant role during infection. The protein is MFS siderochrome iron transporter D of Aspergillus fumigatus (strain ATCC MYA-4609 / CBS 101355 / FGSC A1100 / Af293) (Neosartorya fumigata).